Consider the following 337-residue polypeptide: MIEADRLIEPIASVEDERVDRAIRPKMLQDYTGQQHVKAQMEIFIPAAKNRGEPLDHLLIFGPPGLGKTTLANIVANEMGVNIRTTSGPVLEKAGDLAALLTNLEENDILFIDEIHRLSAVVEEILYPAMEDYQLDIMIGEGPAARSIKLDLPPFTLIGATTRAGALTSPLRDRFGIVQRLEFYNVADLSTIVSRSAHFLNLTIDEEGAFEVARRSRGTPRIANRLLRRVRDYADIKSHGVVNQQTAAAALDMLEVDSEGFDIMDRKLLHAIIDKFMGGPVGLDNVAAAIGEERETIEDVIEPFLIQQGFLQRTPRGRIATDRAYQHFGITKDQTKD.

The tract at residues 4–184 (ADRLIEPIAS…FGIVQRLEFY (181 aa)) is large ATPase domain (RuvB-L). Residues Ile-23, Arg-24, Gly-65, Lys-68, Thr-69, Thr-70, 131–133 (EDY), Arg-174, Tyr-184, and Arg-221 contribute to the ATP site. Thr-69 contacts Mg(2+). The interval 185-255 (NVADLSTIVS…TAAAALDMLE (71 aa)) is small ATPAse domain (RuvB-S). The tract at residues 258 to 337 (SEGFDIMDRK…FGITKDQTKD (80 aa)) is head domain (RuvB-H). Residues Arg-294, Arg-313, and Arg-318 each contribute to the DNA site.

Belongs to the RuvB family. As to quaternary structure, homohexamer. Forms an RuvA(8)-RuvB(12)-Holliday junction (HJ) complex. HJ DNA is sandwiched between 2 RuvA tetramers; dsDNA enters through RuvA and exits via RuvB. An RuvB hexamer assembles on each DNA strand where it exits the tetramer. Each RuvB hexamer is contacted by two RuvA subunits (via domain III) on 2 adjacent RuvB subunits; this complex drives branch migration. In the full resolvosome a probable DNA-RuvA(4)-RuvB(12)-RuvC(2) complex forms which resolves the HJ.

The protein resides in the cytoplasm. The catalysed reaction is ATP + H2O = ADP + phosphate + H(+). Its function is as follows. The RuvA-RuvB-RuvC complex processes Holliday junction (HJ) DNA during genetic recombination and DNA repair, while the RuvA-RuvB complex plays an important role in the rescue of blocked DNA replication forks via replication fork reversal (RFR). RuvA specifically binds to HJ cruciform DNA, conferring on it an open structure. The RuvB hexamer acts as an ATP-dependent pump, pulling dsDNA into and through the RuvAB complex. RuvB forms 2 homohexamers on either side of HJ DNA bound by 1 or 2 RuvA tetramers; 4 subunits per hexamer contact DNA at a time. Coordinated motions by a converter formed by DNA-disengaged RuvB subunits stimulates ATP hydrolysis and nucleotide exchange. Immobilization of the converter enables RuvB to convert the ATP-contained energy into a lever motion, pulling 2 nucleotides of DNA out of the RuvA tetramer per ATP hydrolyzed, thus driving DNA branch migration. The RuvB motors rotate together with the DNA substrate, which together with the progressing nucleotide cycle form the mechanistic basis for DNA recombination by continuous HJ branch migration. Branch migration allows RuvC to scan DNA until it finds its consensus sequence, where it cleaves and resolves cruciform DNA. This chain is Holliday junction branch migration complex subunit RuvB, found in Colwellia psychrerythraea (strain 34H / ATCC BAA-681) (Vibrio psychroerythus).